The following is a 228-amino-acid chain: 2,3-bisphosphoglycerate-dependent phosphoglycerate mutase (228 aa).

Substrate contacts are provided by residues 8–15, 21–22, Arg-60, 87–90, Lys-98, 114–115, and 183–184; these read RHGQSEWN, TG, ERHY, RR, and GN. His-9 functions as the Tele-phosphohistidine intermediate in the catalytic mechanism. Glu-87 (proton donor/acceptor) is an active-site residue.

This sequence belongs to the phosphoglycerate mutase family. BPG-dependent PGAM subfamily.

The enzyme catalyses (2R)-2-phosphoglycerate = (2R)-3-phosphoglycerate. It functions in the pathway carbohydrate degradation; glycolysis; pyruvate from D-glyceraldehyde 3-phosphate: step 3/5. In terms of biological role, catalyzes the interconversion of 2-phosphoglycerate and 3-phosphoglycerate. The sequence is that of 2,3-bisphosphoglycerate-dependent phosphoglycerate mutase from Staphylococcus epidermidis (strain ATCC 35984 / DSM 28319 / BCRC 17069 / CCUG 31568 / BM 3577 / RP62A).